Consider the following 36-residue polypeptide: Photosystem I reaction center subunit VIII (36 aa).

A helical transmembrane segment spans residues 8 to 28; the sequence is SVLVPLVGLVFPAIAMASLFL.

It belongs to the PsaI family.

The protein localises to the plastid. The protein resides in the chloroplast thylakoid membrane. Its function is as follows. May help in the organization of the PsaL subunit. The sequence is that of Photosystem I reaction center subunit VIII from Helianthus annuus (Common sunflower).